A 486-amino-acid polypeptide reads, in one-letter code: LON peptidase N-terminal domain and RING finger protein C14F5.10c (486 aa).

The RING-type zinc finger occupies Cys169–Arg207. The 223-residue stretch at Glu250–Gln472 folds into the Lon N-terminal domain.

The sequence is that of LON peptidase N-terminal domain and RING finger protein C14F5.10c from Schizosaccharomyces pombe (strain 972 / ATCC 24843) (Fission yeast).